The chain runs to 642 residues: Dihydrolipoyllysine-residue acetyltransferase component of pyruvate dehydrogenase complex, mitochondrial (642 aa).

A mitochondrion-targeting transit peptide spans 1-85 (MWRVCARRAR…LLGSPSRRSY (85 aa)). Residues 80-99 (PSRRSYSLPPHQKVPLPSLS) form a disordered region. Lipoyl-binding domains lie at 90 to 166 (HQKV…CITV) and 217 to 293 (HMQI…CIIV). Position 99 is a phosphoserine (serine 99). Residues lysine 131 and lysine 258 each carry the N6-lipoyllysine modification. Residues 313–346 (LKPQAAPPAPPPVAAVPPTPQPVAPTPSAAPAGP) form a disordered region. The span at 317–337 (AAPPAPPPVAAVPPTPQPVAP) shows a compositional bias: pro residues. Residues 351–388 (FVSPLAKKLAAEKGIDLTQVKGTGPEGRIIKKDIDSFV) enclose the Peripheral subunit-binding (PSBD) domain. Arginine 456 serves as a coordination point for CoA. Position 461 is an N6-acetyllysine (lysine 461). Residue lysine 468 is modified to N6-succinyllysine. Serine 470 contributes to the CoA binding site. Lysine 542 bears the N6-succinyllysine mark. Residues serine 561, asparagine 562, and glycine 586 each coordinate CoA. Catalysis depends on residues histidine 615 and aspartate 619.

It belongs to the 2-oxoacid dehydrogenase family. In terms of assembly, part of the pyruvate dehydrogenase complex (PDHc) that is a multi-enzyme complex composed of multiple copies of three enzymes, pyruvate dehydrogenase (subunits PDH1A and PDHB, E1 component), dihydrolipoamide acetyltransferase (DLAT, E2 component), and dihydrolipoamide dehydrogenase (DLD, E3 component) to which is added an additional protein the E3-binding protein (PDHX, E3BP). In terms of structural architecture, the E2 and E3BP components assemble into a 60meric central core with icosahedral symmetry. The central core is decorated with E1 and E3 proteins. Currently, two alternative models for the E2:E3BP stoichiometry are considered as being either 48:12 (E2(48)-E3BP(12)) or 40:20 (E2(40)-E3BP(20)). Interacts with PDK2 and PDK3. Interacts with SIRT4. Interacts with PDHB. Requires (R)-lipoate as cofactor. Delipoylated at Lys-131 and Lys-258 by SIRT4, delipoylation decreases the PHD complex activity.

It localises to the mitochondrion matrix. The enzyme catalyses N(6)-[(R)-dihydrolipoyl]-L-lysyl-[protein] + acetyl-CoA = N(6)-[(R)-S(8)-acetyldihydrolipoyl]-L-lysyl-[protein] + CoA. In terms of biological role, as part of the pyruvate dehydrogenase complex, catalyzes the transfers of an acetyl group to a lipoic acid moiety. The pyruvate dehydrogenase complex, catalyzes the overall conversion of pyruvate to acetyl-CoA and CO(2), and thereby links cytoplasmic glycolysis and the mitochondrial tricarboxylic acid (TCA) cycle. This Mus musculus (Mouse) protein is Dihydrolipoyllysine-residue acetyltransferase component of pyruvate dehydrogenase complex, mitochondrial.